We begin with the raw amino-acid sequence, 544 residues long: Light-independent protochlorophyllide reductase subunit B (544 aa).

Position 36 (Asp-36) interacts with [4Fe-4S] cluster. The active-site Proton donor is Asp-286. 421–422 (GM) contributes to the substrate binding site.

It belongs to the ChlB/BchB/BchZ family. In terms of assembly, protochlorophyllide reductase is composed of three subunits; BchL, BchN and BchB. Forms a heterotetramer of two BchB and two BchN subunits. It depends on [4Fe-4S] cluster as a cofactor.

It carries out the reaction chlorophyllide a + oxidized 2[4Fe-4S]-[ferredoxin] + 2 ADP + 2 phosphate = protochlorophyllide a + reduced 2[4Fe-4S]-[ferredoxin] + 2 ATP + 2 H2O. It functions in the pathway porphyrin-containing compound metabolism; bacteriochlorophyll biosynthesis (light-independent). Component of the dark-operative protochlorophyllide reductase (DPOR) that uses Mg-ATP and reduced ferredoxin to reduce ring D of protochlorophyllide (Pchlide) to form chlorophyllide a (Chlide). This reaction is light-independent. The NB-protein (BchN-BchB) is the catalytic component of the complex. The polypeptide is Light-independent protochlorophyllide reductase subunit B (Chloroflexus aggregans (strain MD-66 / DSM 9485)).